The chain runs to 172 residues: Peptide methionine sulfoxide reductase MsrA (172 aa).

Cys-14 is an active-site residue.

It belongs to the MsrA Met sulfoxide reductase family.

The catalysed reaction is L-methionyl-[protein] + [thioredoxin]-disulfide + H2O = L-methionyl-(S)-S-oxide-[protein] + [thioredoxin]-dithiol. The enzyme catalyses [thioredoxin]-disulfide + L-methionine + H2O = L-methionine (S)-S-oxide + [thioredoxin]-dithiol. Functionally, has an important function as a repair enzyme for proteins that have been inactivated by oxidation. Catalyzes the reversible oxidation-reduction of methionine sulfoxide in proteins to methionine. The chain is Peptide methionine sulfoxide reductase MsrA from Streptomyces coelicolor (strain ATCC BAA-471 / A3(2) / M145).